A 378-amino-acid polypeptide reads, in one-letter code: MAKKLKKNEEITKKFGDERRKALDDALKNIEKDFGKGAVMRLGERAEQKVQVMSSGSLALDIALGAGGYPKGRIIEIYGPESSGKTTVALHAVAQAQKEGGIAAFIDAEHALDPAYAAALGVNIDELLLSQPDSGEQGLEIAGKLIDSGAVDLVVVDSVAALVPRAEIDGDIGDSHVGLQARMMSQAMRKLSASINKTKTIAIFINQLREKVGVMFGNPETTPGGRALKFYASVRLDVRGTTQIKGTGDQKDSSIGKETKIKVVKNKVAPPFKVAEVEIMYGEGISRTGELVKIASDLDIIQKAGAWFSYNGEKIGQGSENAKRYLAEHPELFDEIDRKVRVKFGLLEESEEESAMAVASEETDDLALDLDNGIEIED.

Residue 79–86 participates in ATP binding; sequence GPESSGKT.

It belongs to the RecA family.

It localises to the cytoplasm. Can catalyze the hydrolysis of ATP in the presence of single-stranded DNA, the ATP-dependent uptake of single-stranded DNA by duplex DNA, and the ATP-dependent hybridization of homologous single-stranded DNAs. It interacts with LexA causing its activation and leading to its autocatalytic cleavage. The sequence is that of Protein RecA from Streptococcus pyogenes serotype M12 (strain MGAS2096).